A 314-amino-acid chain; its full sequence is R2-like ligand binding oxidase (314 aa).

Residues Glu68, Glu101, and His104 each coordinate Mn(2+). A cross-link (3-(O4'-tyrosyl)-valine (Val-Tyr)) is located at residues Val71–Tyr162. Glu101 lines the Fe cation pocket. Positions 167, 202, and 205 each coordinate Fe cation.

Belongs to the ribonucleoside diphosphate reductase small chain family. R2-like ligand binding oxidase subfamily. In terms of assembly, homodimer. Fe cation serves as cofactor. The cofactor is Mn(2+).

In terms of biological role, probable oxidase that might be involved in lipid metabolism. The chain is R2-like ligand binding oxidase from Mycobacterium bovis (strain ATCC BAA-935 / AF2122/97).